The chain runs to 441 residues: Mannose-6-phosphate isomerase 2 (441 aa).

The Zn(2+) site is built by glutamine 131, histidine 133, glutamate 158, and histidine 296. Residue arginine 315 is part of the active site.

The protein belongs to the mannose-6-phosphate isomerase type 1 family. Zn(2+) is required as a cofactor. As to expression, not expressed in any organs under light (at protein level).

The enzyme catalyses D-mannose 6-phosphate = D-fructose 6-phosphate. It participates in nucleotide-sugar biosynthesis; GDP-alpha-D-mannose biosynthesis; alpha-D-mannose 1-phosphate from D-fructose 6-phosphate: step 1/2. With respect to regulation, inhibited by EDTA, Zn(2+), Cd(2+), DTT, p-chloromercuribenzoate and L-ascorbic acid (AsA). Functionally, involved in the synthesis of the GDP-mannose and dolichol-phosphate-mannose required for a number of critical mannosyl transfer reactions. The sequence is that of Mannose-6-phosphate isomerase 2 (PMI2) from Arabidopsis thaliana (Mouse-ear cress).